The chain runs to 407 residues: Serine hydroxymethyltransferase (407 aa).

Pyridoxal 5'-phosphate is bound by residues Tyr-51 and 94 to 95; that span reads GS. Residues Leu-117 and 121 to 123 each bind (6S)-5,6,7,8-tetrahydrofolate; that span reads GHL. Pyridoxal 5'-phosphate-binding residues include Ser-172, His-200, and His-225. At Lys-226 the chain carries N6-(pyridoxal phosphate)lysine. Position 242 (Glu-242) interacts with (6S)-5,6,7,8-tetrahydrofolate. Gly-258 is a pyridoxal 5'-phosphate binding site.

The protein belongs to the SHMT family. As to quaternary structure, homodimer. Pyridoxal 5'-phosphate is required as a cofactor.

The protein localises to the cytoplasm. The enzyme catalyses (6R)-5,10-methylene-5,6,7,8-tetrahydrofolate + glycine + H2O = (6S)-5,6,7,8-tetrahydrofolate + L-serine. It participates in one-carbon metabolism; tetrahydrofolate interconversion. Its pathway is amino-acid biosynthesis; glycine biosynthesis; glycine from L-serine: step 1/1. Functionally, catalyzes the reversible interconversion of serine and glycine with tetrahydrofolate (THF) serving as the one-carbon carrier. This reaction serves as the major source of one-carbon groups required for the biosynthesis of purines, thymidylate, methionine, and other important biomolecules. Also exhibits THF-independent aldolase activity toward beta-hydroxyamino acids, producing glycine and aldehydes, via a retro-aldol mechanism. The sequence is that of Serine hydroxymethyltransferase from Thermus thermophilus (strain ATCC 27634 / DSM 579 / HB8).